A 326-amino-acid chain; its full sequence is AA10 family lytic polysaccharide monooxygenase C (326 aa).

Positions 1–32 (MVFSNSNASVSLFRLVALVATLSHLVFTFVDA) are cleaved as a signal peptide. 2 residues coordinate Cu(2+): His-33 and His-118. One can recognise a Chitin-binding type-4 domain in the interval 33 to 200 (HGYVTFPASR…ANAFYQCLDL (168 aa)). The cysteines at positions 81 and 197 are disulfide-linked. N-linked (GlcNAc...) asparagine glycans are attached at residues Asn-206, Asn-215, Asn-266, and Asn-303. Positions 206–326 (NSSSSSSSSN…KSQMRRDRQG (121 aa)) are disordered. The span at 207–281 (SSSSSSSSNS…NNGGSSGSTT (75 aa)) shows a compositional bias: low complexity.

Belongs to the polysaccharide monooxygenase AA10 family. Cu(2+) is required as a cofactor.

It localises to the secreted. Its function is as follows. Lytic polysaccharide monooxygenase (LPMO) that oxidatively cleaves alpha- and beta-chitin with C1 regioselectivity. Catalysis by LPMOs requires the reduction of the active-site copper from Cu(II) to Cu(I) by a reducing agent and H(2)O(2) or O(2) as a cosubstrate. Exhibits enzymatic activity on U.maydis fungal cell wall chitin and Boosts chitin hydrolysis by chitinase GH18A. In Mycosarcoma maydis (Corn smut fungus), this protein is AA10 family lytic polysaccharide monooxygenase C.